A 438-amino-acid chain; its full sequence is GTPase Der (438 aa).

2 consecutive EngA-type G domains span residues 4–168 (PIVA…KNEG) and 177–352 (IKIA…DNYC). GTP is bound by residues 10–17 (GRPNVGKS), 57–61 (DTGGI), 120–123 (NKID), 183–190 (GKPNVGKS), 230–234 (DTAGV), and 295–298 (NKWD). One can recognise a KH-like domain in the interval 353–437 (KQIKTGILND…GIKLEFRERK (85 aa)).

This sequence belongs to the TRAFAC class TrmE-Era-EngA-EngB-Septin-like GTPase superfamily. EngA (Der) GTPase family. In terms of assembly, associates with the 50S ribosomal subunit.

GTPase that plays an essential role in the late steps of ribosome biogenesis. The chain is GTPase Der from Clostridium kluyveri (strain NBRC 12016).